The chain runs to 306 residues: Agmatinase (306 aa).

Mn(2+)-binding residues include His128, Asp151, His153, Asp155, Asp232, and Asp234.

This sequence belongs to the arginase family. Agmatinase subfamily. Mn(2+) is required as a cofactor.

The catalysed reaction is agmatine + H2O = urea + putrescine. It participates in amine and polyamine biosynthesis; putrescine biosynthesis via agmatine pathway; putrescine from agmatine: step 1/1. In terms of biological role, catalyzes the formation of putrescine from agmatine. This is Agmatinase (speB) from Proteus mirabilis.